Here is a 448-residue protein sequence, read N- to C-terminus: Phosphoglucosamine mutase (448 aa).

Ser100 (phosphoserine intermediate) is an active-site residue. The Mg(2+) site is built by Ser100, Asp240, Asp242, and Asp244. Ser100 is modified (phosphoserine).

It belongs to the phosphohexose mutase family. It depends on Mg(2+) as a cofactor. In terms of processing, activated by phosphorylation.

It carries out the reaction alpha-D-glucosamine 1-phosphate = D-glucosamine 6-phosphate. Functionally, catalyzes the conversion of glucosamine-6-phosphate to glucosamine-1-phosphate. This Bacillus cytotoxicus (strain DSM 22905 / CIP 110041 / 391-98 / NVH 391-98) protein is Phosphoglucosamine mutase.